Here is an 83-residue protein sequence, read N- to C-terminus: Putative beta-neurotoxin RjAa17f (83 aa).

A signal peptide spans 1 to 18; it reads MKILIFIIASFMLIGVEC. One can recognise an LCN-type CS-alpha/beta domain in the interval 19-82; the sequence is KEGYPMGRNG…VWDFSNIKCR (64 aa). Intrachain disulfides connect Cys29–Cys81, Cys33–Cys55, Cys40–Cys62, and Cys44–Cys64.

This sequence belongs to the long (4 C-C) scorpion toxin superfamily. Sodium channel inhibitor family. Beta subfamily. Expressed by the venom gland.

The protein resides in the secreted. Functionally, beta toxins bind voltage-independently at site-4 of sodium channels (Nav) and shift the voltage of activation toward more negative potentials thereby affecting sodium channel activation and promoting spontaneous and repetitive firing. This chain is Putative beta-neurotoxin RjAa17f, found in Rhopalurus junceus (Caribbean blue scorpion).